A 217-amino-acid chain; its full sequence is Histone H1C (217 aa).

Low complexity-rich tracts occupy residues 1–11 (MAETASTETTP) and 28–45 (KKAAGGAKAKKPSGPSAS). Disordered stretches follow at residues 1-45 (MAET…PSAS) and 123-217 (VAKK…AAKK). Residues 40 to 113 (SGPSASELIV…GASGSFKLNK (74 aa)) form the H15 domain. 2 stretches are compositionally biased toward basic residues: residues 123-151 (VAKKKLVAPKAKKPVTAKKKPKSPKKPKK) and 159-217 (SPKK…AAKK).

Belongs to the histone H1/H5 family.

Its subcellular location is the nucleus. It localises to the chromosome. In terms of biological role, histones H1 are necessary for the condensation of nucleosome chains into higher-order structures. In Xenopus laevis (African clawed frog), this protein is Histone H1C.